The sequence spans 619 residues: TOX high mobility group box family member 4 (619 aa).

2 disordered regions span residues 155–227 (LSLG…QKPV) and 306–335 (DPVP…TESP). The residue at position 176 (Thr176) is a Phosphothreonine. Phosphoserine is present on residues Ser178 and Ser182. The segment covering 183–193 (LHEDGVDDFRR) has biased composition (basic and acidic residues). Residues 208-218 (KQKAPKKRKKK) are compositionally biased toward basic residues. Positions 213–218 (KKRKKK) match the Nuclear localization signal motif. Positions 223–291 (PQKPVSAYAL…EYLKALAAYK (69 aa)) form a DNA-binding region, HMG box. Thr313 carries the phosphothreonine modification. Phosphoserine is present on Ser315. A compositionally biased stretch (low complexity) spans 320–335 (TAADPASPAPASTESP). Asymmetric dimethylarginine is present on Arg479. Ser531, Ser548, Ser550, Ser558, Ser560, and Ser565 each carry phosphoserine.

Component of the PNUTS-PP1 phosphatase complex, composed of PPP1R10/PNUTS, TOX4, WDR82 and PPP1CA or PPP1CB or PPP1CC. Interacts with PPP1R10/PNUTS. Interacts with FOXO1 and CREB1 (increased by cAMP); FOXO1 and CREB1 are required for full induction of TOX4-dependent activity and the interactions are inhibited by insulin.

The protein localises to the nucleus. The protein resides in the chromosome. With respect to regulation, in liver, recruited to target gene promoters following treatment with dexamethasone and cAMP. Binding is decreased in presence of insulin. Its function is as follows. Transcription factor that modulates cell fate reprogramming from the somatic state to the pluripotent and neuronal fate. In liver, controls the expression of hormone-regulated gluconeogenic genes such as G6PC1 and PCK1. This regulation is independent of the insulin receptor activation. Also acts as a regulatory component of protein phosphatase 1 (PP1) complexes. Component of the PNUTS-PP1 protein phosphatase complex, a PP1 complex that regulates RNA polymerase II transcription pause-release. PNUTS-PP1 also plays a role in the control of chromatin structure and cell cycle progression during the transition from mitosis into interphase. The chain is TOX high mobility group box family member 4 from Mus musculus (Mouse).